A 236-amino-acid chain; its full sequence is Bax inhibitor 1 (236 aa).

The Cytoplasmic segment spans residues 1–29 (MNIFDRKINFDALFKFSHITPSTQQHLKK). Lysine 7 is covalently cross-linked (Glycyl lysine isopeptide (Lys-Gly) (interchain with G-Cter in ubiquitin)). Residues 30–50 (VYASFALCMFVAAAGAYIHVV) form a helical membrane-spanning segment. Topologically, residues 51 to 52 (TH) are lumenal. The chain crosses the membrane as a helical span at residues 53–73 (FIQAGLLSALGSLGLMIWLMA). Residues 74–86 (TPHSHETEQKRLG) are Cytoplasmic-facing. A helical transmembrane segment spans residues 87–107 (LLAGFAFLTGVGLGPALDLCI). Topologically, residues 108–112 (AINPS) are lumenal. A helical membrane pass occupies residues 113–133 (ILPTAFMGTAMIFTCFTLSAL). The Cytoplasmic portion of the chain corresponds to 134–139 (YARRRS). A helical membrane pass occupies residues 140–160 (YLFLGGILMSAMSLMLLSSLG). At 161–166 (NLFFGS) the chain is on the lumenal side. The helical transmembrane segment at 167–187 (VWLFQANLYMGLVVMCGFVLF) threads the bilayer. Topologically, residues 188-206 (DTQLIIEKAENGDKDYIWH) are cytoplasmic. The helical intramembrane region spans 207-227 (CVDLFLDFVTLFRKLMMILAM). Residues 228–236 (NEKDKKKKK) are Cytoplasmic-facing.

It belongs to the BI1 family. As to quaternary structure, interacts with BCL2 and BCL2L1. Interacts with ERN1. Ubiquitinated by BFAR, leading to proteasomal degradation.

It localises to the endoplasmic reticulum membrane. In terms of biological role, endoplasmic reticulum (ER)-resident protein that confers cellular protection as an anti-apoptotic protein by limiting multiple stress-inducing pathways surrounding the endoplasmic reticulum and mitochondria. Inhibits the activities of the key sensor for the endoplasmic reticulum unfolded protein response IRE1alpha/ERN1 both directly and by blocking BAX/BAK binding. Modulates ER calcium homeostasis by acting as a calcium-leak channel. Negatively regulates autophagy and autophagosome formation, especially during periods of nutrient deprivation, and reduces cell survival during starvation. The polypeptide is Bax inhibitor 1 (TMBIM6) (Bos taurus (Bovine)).